A 310-amino-acid chain; its full sequence is Malate dehydrogenase (310 aa).

Residues 7–13 (GAAGGIG) and D34 each bind NAD(+). R81 and R87 together coordinate substrate. Residues N94 and 117–119 (ITN) each bind NAD(+). Substrate is bound by residues N119 and R153. H177 functions as the Proton acceptor in the catalytic mechanism. M227 serves as a coordination point for NAD(+).

The protein belongs to the LDH/MDH superfamily. MDH type 1 family. In terms of assembly, homodimer.

The enzyme catalyses (S)-malate + NAD(+) = oxaloacetate + NADH + H(+). Functionally, catalyzes the reversible oxidation of malate to oxaloacetate. The sequence is that of Malate dehydrogenase from Idiomarina loihiensis (strain ATCC BAA-735 / DSM 15497 / L2-TR).